Reading from the N-terminus, the 257-residue chain is uncharacterized protein (257 aa).

Positions 1-26 (MKKAFILSAAAAVGLFTFGGVQQASA) are cleaved as a signal peptide. Residues 80–135 (AKQSNVKVQDVQKTETAKPAQKTTEKAAADQNTASKAPATAEKTNTTTSAPSSVSA) form a disordered region. Residues 121–134 (EKTNTTTSAPSSVS) show a composition bias toward polar residues. In terms of domain architecture, SCP spans 141-254 (VELTNAERQK…ESGSIWTQQF (114 aa)).

This is an uncharacterized protein from Bacillus subtilis (strain 168).